We begin with the raw amino-acid sequence, 421 residues long: UDP-N-acetylglucosamine 1-carboxyvinyltransferase (421 aa).

Phosphoenolpyruvate is bound at residue 24–25 (KN). R93 lines the UDP-N-acetyl-alpha-D-glucosamine pocket. C117 (proton donor) is an active-site residue. C117 carries the 2-(S-cysteinyl)pyruvic acid O-phosphothioketal modification. UDP-N-acetyl-alpha-D-glucosamine-binding residues include D307 and I329.

This sequence belongs to the EPSP synthase family. MurA subfamily.

It localises to the cytoplasm. The catalysed reaction is phosphoenolpyruvate + UDP-N-acetyl-alpha-D-glucosamine = UDP-N-acetyl-3-O-(1-carboxyvinyl)-alpha-D-glucosamine + phosphate. Its pathway is cell wall biogenesis; peptidoglycan biosynthesis. Functionally, cell wall formation. Adds enolpyruvyl to UDP-N-acetylglucosamine. This Blochmanniella pennsylvanica (strain BPEN) protein is UDP-N-acetylglucosamine 1-carboxyvinyltransferase.